The following is a 92-amino-acid chain: Small ribosomal subunit protein uS19c (92 aa).

It belongs to the universal ribosomal protein uS19 family.

Its subcellular location is the plastid. It localises to the chloroplast. Its function is as follows. Protein S19 forms a complex with S13 that binds strongly to the 16S ribosomal RNA. This Porphyra purpurea (Red seaweed) protein is Small ribosomal subunit protein uS19c (rps19).